The sequence spans 98 residues: Ferredoxin-like protein (98 aa).

Positions 57 to 87 constitute a 4Fe-4S ferredoxin-type domain; the sequence is GQVEVTADGCMECGTCRVLCEANGDVEWSYP.

It to ferredoxins from P.putida and C.tartarivorum, ferredoxin I from A.vinelandii, ferredoxin II from D.desulfuricans.

Could be a 3Fe-4S cluster-containing protein. The polypeptide is Ferredoxin-like protein (fixX) (Rhizobium meliloti (strain 1021) (Ensifer meliloti)).